A 678-amino-acid polypeptide reads, in one-letter code: DNA ligase (678 aa).

Residues 36 to 40 (DSEFD), 85 to 86 (SL), and glutamate 117 contribute to the NAD(+) site. Residue lysine 119 is the N6-AMP-lysine intermediate of the active site. NAD(+)-binding residues include arginine 140, glutamate 177, lysine 294, and lysine 318. Zn(2+)-binding residues include cysteine 412, cysteine 415, cysteine 430, and cysteine 436. The BRCT domain maps to 595 to 678 (IIDAPLLGKT…TWWQHYGNAV (84 aa)).

This sequence belongs to the NAD-dependent DNA ligase family. LigA subfamily. Mg(2+) serves as cofactor. The cofactor is Mn(2+).

It catalyses the reaction NAD(+) + (deoxyribonucleotide)n-3'-hydroxyl + 5'-phospho-(deoxyribonucleotide)m = (deoxyribonucleotide)n+m + AMP + beta-nicotinamide D-nucleotide.. In terms of biological role, DNA ligase that catalyzes the formation of phosphodiester linkages between 5'-phosphoryl and 3'-hydroxyl groups in double-stranded DNA using NAD as a coenzyme and as the energy source for the reaction. It is essential for DNA replication and repair of damaged DNA. The polypeptide is DNA ligase (Dichelobacter nodosus (strain VCS1703A)).